The sequence spans 434 residues: D-amino acid dehydrogenase (434 aa).

3 to 17 (VLVLGSGVIGTTSAW) contacts FAD.

It belongs to the DadA oxidoreductase family. FAD is required as a cofactor.

It catalyses the reaction a D-alpha-amino acid + A + H2O = a 2-oxocarboxylate + AH2 + NH4(+). It participates in amino-acid degradation; D-alanine degradation; NH(3) and pyruvate from D-alanine: step 1/1. Oxidative deamination of D-amino acids. The protein is D-amino acid dehydrogenase of Stenotrophomonas maltophilia (strain R551-3).